Reading from the N-terminus, the 414-residue chain is Histidine--tRNA ligase (414 aa).

This sequence belongs to the class-II aminoacyl-tRNA synthetase family. Homodimer.

The protein localises to the cytoplasm. The enzyme catalyses tRNA(His) + L-histidine + ATP = L-histidyl-tRNA(His) + AMP + diphosphate + H(+). The protein is Histidine--tRNA ligase of Endomicrobium trichonymphae.